A 156-amino-acid polypeptide reads, in one-letter code: MAKKGSGYGPRGGDFRYNDEAVARLINAIMLDGKKVVATKIVYDAFDIIANKVEGGDALEVFRKAMGNVAPLVEVRSKRVGGATYQIPMEVPASRRTALAFRWIKQFAARRGGRSMAEKLAAELLDASNEQGASVKKRDEVHRMAEANKAFAHFRF.

Belongs to the universal ribosomal protein uS7 family. Part of the 30S ribosomal subunit. Contacts proteins S9 and S11.

In terms of biological role, one of the primary rRNA binding proteins, it binds directly to 16S rRNA where it nucleates assembly of the head domain of the 30S subunit. Is located at the subunit interface close to the decoding center, probably blocks exit of the E-site tRNA. This is Small ribosomal subunit protein uS7 from Chlorobaculum tepidum (strain ATCC 49652 / DSM 12025 / NBRC 103806 / TLS) (Chlorobium tepidum).